A 383-amino-acid chain; its full sequence is ERCC4 domain-containing protein EP364R (383 aa).

The 99-residue stretch at Phe3–Ala101 folds into the ERCC4 domain. A disordered region spans residues Leu336 to Thr367. A compositionally biased stretch (basic and acidic residues) spans Ala347–Ser356. Positions Asp357–Thr367 are enriched in polar residues.

It belongs to the asfivirus EP364R family.

Functionally, plays a role in the inhibition of type I interferon signaling pathway. Mechanistically, specifically interacts with 2',3'-cGAMP and cleaves it via its phosphodiesterase activity. In turn, prevents 2',3'-cGAMP interaction with host ER-resident STING1 leading to inhibition of downstream signaling pathway and type I interferon production. This Ornithodoros (relapsing fever ticks) protein is ERCC4 domain-containing protein EP364R.